The primary structure comprises 142 residues: Transcriptional regulator MraZ (142 aa).

SpoVT-AbrB domains are found at residues 5–51 and 77–120; these read ASAL…PRPE and AADV…DAAT.

This sequence belongs to the MraZ family. Forms oligomers.

The protein localises to the cytoplasm. Its subcellular location is the nucleoid. The protein is Transcriptional regulator MraZ of Ralstonia nicotianae (strain ATCC BAA-1114 / GMI1000) (Ralstonia solanacearum).